Here is a 134-residue protein sequence, read N- to C-terminus: Terepressin/terephysin (134 aa).

Positions 1–33 (MKCSVLQMSRLSWTACVLLLPLLLLTLQGGVQG) are cleaved as a signal peptide. An intrachain disulfide couples Cys34 to Cys39. A propeptide spanning residues 44–50 (KRAVDSV) is cleaved from the precursor. 7 disulfide bridges follow: Cys56-Cys100, Cys59-Cys73, Cys67-Cys90, Cys74-Cys80, Cys107-Cys121, Cys115-Cys133, and Cys122-Cys127.

It belongs to the vasopressin/oxytocin family. Post-translationally, contains 7 disulfide bonds. Expressed by the venom duct.

It localises to the secreted. This is Terepressin/terephysin from Terebra anilis (Auger snail).